A 453-amino-acid polypeptide reads, in one-letter code: uncharacterized protein (453 aa).

The [4Fe-4S] cluster site is built by C74, C80, C83, and C162. S-adenosyl-L-methionine-binding residues include Q286, Y315, E336, and D384. Catalysis depends on C411, which acts as the Nucleophile.

The protein belongs to the class I-like SAM-binding methyltransferase superfamily. RNA M5U methyltransferase family.

This is an uncharacterized protein from Staphylococcus aureus (strain COL).